The primary structure comprises 513 residues: MTEPTQPNAAQPNVVPEVDDNKIIAERREKLRELREQGVAYPNDFRPTHHAEDLQAQYEHSDKEALEANPLEVAIAGRMMLKRVMGKASFATVRDGSGQIQFFITPADVGQETYDAFKKWDMGDIVAARGVLFRTNKGELSVRCTELRLLSKSLRPLPDKFHGLSDQEMKYRQRYVDLIVTPETRKTFVARTKAISSIRKFMADADFMEVETPMLHPIPGGAAAKPFTTHHNALDMQMFLRIAPELYLKRLVVGGFERVFEINRNFRNEGVSVRHNPEFTMIEFYAAYTDYKWLMDFTEQLIRQAAIDALGTATITYQGRELDLAKPFHRLTITQAIQKYAPQYTNEQLADSAFLRTELKKFGVDASQPQFLNAGVGALQLALFEETAESQLWEPTYIIDYPIEVSPLARASDKVEGITERFELFITGREIANGFSELNDPEDQAARFRKQVDQKDAGDEEAMFYDADYIRALEYGMPPAGGCGIGIDRLVMLLTDSPSIRDVILFPHLRRED.

Residues 1–11 (MTEPTQPNAAQ) are compositionally biased toward polar residues. Residues 1–22 (MTEPTQPNAAQPNVVPEVDDNK) form a disordered region. Mg(2+) is bound by residues E423 and E430.

Belongs to the class-II aminoacyl-tRNA synthetase family. In terms of assembly, homodimer. Mg(2+) is required as a cofactor.

Its subcellular location is the cytoplasm. The enzyme catalyses tRNA(Lys) + L-lysine + ATP = L-lysyl-tRNA(Lys) + AMP + diphosphate. In Paraburkholderia xenovorans (strain LB400), this protein is Lysine--tRNA ligase.